The chain runs to 275 residues: Probable endonuclease 4 (275 aa).

Residues histidine 66, histidine 106, glutamate 140, aspartate 172, histidine 175, histidine 209, aspartate 222, histidine 224, and glutamate 254 each contribute to the Zn(2+) site.

Belongs to the AP endonuclease 2 family. It depends on Zn(2+) as a cofactor.

It carries out the reaction Endonucleolytic cleavage to 5'-phosphooligonucleotide end-products.. Endonuclease IV plays a role in DNA repair. It cleaves phosphodiester bonds at apurinic or apyrimidinic (AP) sites, generating a 3'-hydroxyl group and a 5'-terminal sugar phosphate. The sequence is that of Probable endonuclease 4 from Halobacterium salinarum (strain ATCC 29341 / DSM 671 / R1).